The following is a 329-amino-acid chain: uncharacterized protein (329 aa).

2 disordered regions span residues 16–41 and 183–229; these read RCGYPKAQEGTPAEGEQNSRKPSRIC and LENK…KFEP. Positions 213–229 are enriched in basic and acidic residues; it reads SNDKANRGEKGEAKFEP.

In terms of tissue distribution, expressed in testis and epididymis. Expressed at lower levels in ovary.

Its function is as follows. Dispensable for normal development and fertility. This is an uncharacterized protein from Mus musculus (Mouse).